Consider the following 388-residue polypeptide: S-adenosylmethionine synthase 1 (388 aa).

Residue Glu11 participates in Mg(2+) binding. ATP is bound at residue His17. Glu45 provides a ligand contact to K(+). L-methionine contacts are provided by Glu58 and Gln101. Residues 168–170 (DAK), 233–236 (SGRF), Asp244, 250–251 (RK), Ala267, Lys271, and Lys275 contribute to the ATP site. Asp244 provides a ligand contact to L-methionine. Lys275 contacts L-methionine.

It belongs to the AdoMet synthase family. Homotetramer. It depends on Mn(2+) as a cofactor. Requires Mg(2+) as cofactor. The cofactor is Co(2+). K(+) serves as cofactor. In terms of tissue distribution, mostly in Roots.

Its subcellular location is the cytoplasm. It carries out the reaction L-methionine + ATP + H2O = S-adenosyl-L-methionine + phosphate + diphosphate. The protein operates within amino-acid biosynthesis; S-adenosyl-L-methionine biosynthesis; S-adenosyl-L-methionine from L-methionine: step 1/1. Its function is as follows. Catalyzes the formation of S-adenosylmethionine from methionine and ATP. The reaction comprises two steps that are both catalyzed by the same enzyme: formation of S-adenosylmethionine (AdoMet) and triphosphate, and subsequent hydrolysis of the triphosphate. The polypeptide is S-adenosylmethionine synthase 1 (SAMS1) (Pinus contorta (Shore pine)).